The following is a 432-amino-acid chain: D-amino acid dehydrogenase (432 aa).

FAD is bound at residue 3 to 17; the sequence is VVILGSGVVGVASAW.

This sequence belongs to the DadA oxidoreductase family. FAD serves as cofactor.

It catalyses the reaction a D-alpha-amino acid + A + H2O = a 2-oxocarboxylate + AH2 + NH4(+). It participates in amino-acid degradation; D-alanine degradation; NH(3) and pyruvate from D-alanine: step 1/1. In terms of biological role, oxidative deamination of D-amino acids. This is D-amino acid dehydrogenase from Shigella sonnei (strain Ss046).